Consider the following 211-residue polypeptide: Interleukin-6 (211 aa).

A signal peptide spans 1-25 (MNSLSTSTFSPVAFSLGLLLVMATA). Cysteine 71 and cysteine 77 form a disulfide bridge. Residue serine 80 is modified to Phosphoserine. Cysteine 100 and cysteine 110 are oxidised to a cystine.

The protein belongs to the IL-6 superfamily. As to quaternary structure, component of a hexamer of two molecules each of IL6, IL6R and IL6ST; first binds to IL6R to associate with the signaling subunit IL6ST. Interacts with IL6R (via the N-terminal ectodomain); this interaction may be affected by IL6R-binding with SORL1, hence decreasing IL6 cis signaling. Interacts with SORL1 (via the N-terminal ectodomain); this interaction leads to IL6 internalization and lysosomal degradation. May form a trimeric complex with the soluble SORL1 ectodomain and soluble IL6R receptor; this interaction might stabilize circulating IL6, hence promoting IL6 trans signaling.

The protein localises to the secreted. Cytokine with a wide variety of biological functions in immunity, tissue regeneration, and metabolism. Binds to IL6R, then the complex associates to the signaling subunit IL6ST/gp130 to trigger the intracellular IL6-signaling pathway. The interaction with the membrane-bound IL6R and IL6ST stimulates 'classic signaling', whereas the binding of IL6 and soluble IL6R to IL6ST stimulates 'trans-signaling'. Alternatively, 'cluster signaling' occurs when membrane-bound IL6:IL6R complexes on transmitter cells activate IL6ST receptors on neighboring receiver cells. Functionally, IL6 is a potent inducer of the acute phase response. Rapid production of IL6 contributes to host defense during infection and tissue injury, but excessive IL6 synthesis is involved in disease pathology. In the innate immune response, is synthesized by myeloid cells, such as macrophages and dendritic cells, upon recognition of pathogens through toll-like receptors (TLRs) at the site of infection or tissue injury. In the adaptive immune response, is required for the differentiation of B cells into immunoglobulin-secreting cells. Plays a major role in the differentiation of CD4(+) T cell subsets. Essential factor for the development of T follicular helper (Tfh) cells that are required for the induction of germinal-center formation. Required to drive naive CD4(+) T cells to the Th17 lineage. Also required for proliferation of myeloma cells and the survival of plasmablast cells. Its function is as follows. Acts as an essential factor in bone homeostasis and on vessels directly or indirectly by induction of VEGF, resulting in increased angiogenesis activity and vascular permeability. Induces, through 'trans-signaling' and synergistically with IL1B and TNF, the production of VEGF. Involved in metabolic controls, is discharged into the bloodstream after muscle contraction increasing lipolysis and improving insulin resistance. 'Trans-signaling' in central nervous system also regulates energy and glucose homeostasis. Mediates, through GLP-1, crosstalk between insulin-sensitive tissues, intestinal L cells and pancreatic islets to adapt to changes in insulin demand. Also acts as a myokine. Plays a protective role during liver injury, being required for maintenance of tissue regeneration. Also has a pivotal role in iron metabolism by regulating HAMP/hepcidin expression upon inflammation or bacterial infection. Through activation of IL6ST-YAP-NOTCH pathway, induces inflammation-induced epithelial regeneration. This is Interleukin-6 (IL6) from Lama glama (Llama).